A 110-amino-acid chain; its full sequence is Hydrogenase maturation factor HypA (110 aa).

Histidine 2 serves as a coordination point for Ni(2+). Zn(2+) contacts are provided by cysteine 70, cysteine 73, cysteine 86, and cysteine 89.

Belongs to the HypA/HybF family.

Involved in the maturation of [NiFe] hydrogenases. Required for nickel insertion into the metal center of the hydrogenase. The sequence is that of Hydrogenase maturation factor HypA from Geobacter sulfurreducens (strain ATCC 51573 / DSM 12127 / PCA).